Consider the following 315-residue polypeptide: 4-hydroxy-3-methylbut-2-enyl diphosphate reductase (315 aa).

Position 12 (Cys12) interacts with [4Fe-4S] cluster. Residues His41 and His74 each contribute to the (2E)-4-hydroxy-3-methylbut-2-enyl diphosphate site. His41 and His74 together coordinate dimethylallyl diphosphate. Isopentenyl diphosphate contacts are provided by His41 and His74. Cys96 serves as a coordination point for [4Fe-4S] cluster. His124 contributes to the (2E)-4-hydroxy-3-methylbut-2-enyl diphosphate binding site. Residue His124 coordinates dimethylallyl diphosphate. Residue His124 participates in isopentenyl diphosphate binding. The active-site Proton donor is Glu126. A (2E)-4-hydroxy-3-methylbut-2-enyl diphosphate-binding site is contributed by Thr167. Cys197 contacts [4Fe-4S] cluster. Residues Ser225, Ser226, Asn227, and Ser269 each contribute to the (2E)-4-hydroxy-3-methylbut-2-enyl diphosphate site. Dimethylallyl diphosphate-binding residues include Ser225, Ser226, Asn227, and Ser269. 4 residues coordinate isopentenyl diphosphate: Ser225, Ser226, Asn227, and Ser269.

Belongs to the IspH family. As to quaternary structure, homodimer. [4Fe-4S] cluster serves as cofactor.

It carries out the reaction isopentenyl diphosphate + 2 oxidized [2Fe-2S]-[ferredoxin] + H2O = (2E)-4-hydroxy-3-methylbut-2-enyl diphosphate + 2 reduced [2Fe-2S]-[ferredoxin] + 2 H(+). It catalyses the reaction dimethylallyl diphosphate + 2 oxidized [2Fe-2S]-[ferredoxin] + H2O = (2E)-4-hydroxy-3-methylbut-2-enyl diphosphate + 2 reduced [2Fe-2S]-[ferredoxin] + 2 H(+). It functions in the pathway isoprenoid biosynthesis; dimethylallyl diphosphate biosynthesis; dimethylallyl diphosphate from (2E)-4-hydroxy-3-methylbutenyl diphosphate: step 1/1. Its pathway is isoprenoid biosynthesis; isopentenyl diphosphate biosynthesis via DXP pathway; isopentenyl diphosphate from 1-deoxy-D-xylulose 5-phosphate: step 6/6. Functionally, catalyzes the conversion of 1-hydroxy-2-methyl-2-(E)-butenyl 4-diphosphate (HMBPP) into a mixture of isopentenyl diphosphate (IPP) and dimethylallyl diphosphate (DMAPP). Acts in the terminal step of the DOXP/MEP pathway for isoprenoid precursor biosynthesis. The chain is 4-hydroxy-3-methylbut-2-enyl diphosphate reductase from Wigglesworthia glossinidia brevipalpis.